The following is a 371-amino-acid chain: Maltose/maltodextrin import ATP-binding protein MalK (371 aa).

The region spanning 4 to 234 (VTLKNVCKAY…PENRFVAGFI (231 aa)) is the ABC transporter domain. 36-43 (GPSGCGKS) is an ATP binding site.

This sequence belongs to the ABC transporter superfamily. Maltooligosaccharide importer (TC 3.A.1.1.1) family. The complex is composed of two ATP-binding proteins (MalK), two transmembrane proteins (MalG and MalK) and a solute-binding protein (MalE).

The protein resides in the cell inner membrane. It catalyses the reaction D-maltose(out) + ATP + H2O = D-maltose(in) + ADP + phosphate + H(+). Part of the ABC transporter complex MalEFGK involved in maltose/maltodextrin import. Responsible for energy coupling to the transport system. This chain is Maltose/maltodextrin import ATP-binding protein MalK, found in Vibrio vulnificus (strain CMCP6).